Reading from the N-terminus, the 166-residue chain is Small ribosomal subunit protein uS5 (166 aa).

The S5 DRBM domain maps to 12–75 (YIEKLVQVNR…EAARRNMIQV (64 aa)).

This sequence belongs to the universal ribosomal protein uS5 family. Part of the 30S ribosomal subunit. Contacts proteins S4 and S8.

Its function is as follows. With S4 and S12 plays an important role in translational accuracy. Functionally, located at the back of the 30S subunit body where it stabilizes the conformation of the head with respect to the body. The sequence is that of Small ribosomal subunit protein uS5 from Pseudomonas aeruginosa (strain LESB58).